We begin with the raw amino-acid sequence, 277 residues long: Large ribosomal subunit protein uL2 (277 aa).

The tract at residues Val-220–Arg-277 is disordered. A compositionally biased stretch (basic residues) spans Thr-254–Lys-263.

It belongs to the universal ribosomal protein uL2 family. As to quaternary structure, part of the 50S ribosomal subunit. Forms a bridge to the 30S subunit in the 70S ribosome.

One of the primary rRNA binding proteins. Required for association of the 30S and 50S subunits to form the 70S ribosome, for tRNA binding and peptide bond formation. It has been suggested to have peptidyltransferase activity; this is somewhat controversial. Makes several contacts with the 16S rRNA in the 70S ribosome. The chain is Large ribosomal subunit protein uL2 from Latilactobacillus sakei subsp. sakei (strain 23K) (Lactobacillus sakei subsp. sakei).